The primary structure comprises 473 residues: Photosystem II CP43 reaction center protein (473 aa).

Residues 1–14 constitute a propeptide that is removed on maturation; sequence MKTLYSLRRFYPVE. Threonine 15 is modified (N-acetylthreonine). Threonine 15 is subject to Phosphothreonine. Helical transmembrane passes span 69-93, 134-155, 178-200, 255-275, and 291-312; these read LFEV…PHLA, LIGP…KDRS, KALY…RKIT, KPFA…LSYS, and WFNN…ASQA. Position 367 (glutamate 367) interacts with [CaMn4O5] cluster. A helical transmembrane segment spans residues 447–471; sequence RARAAAAGFEKGIDRDFEPVLSMNP.

The protein belongs to the PsbB/PsbC family. PsbC subfamily. PSII is composed of 1 copy each of membrane proteins PsbA, PsbB, PsbC, PsbD, PsbE, PsbF, PsbH, PsbI, PsbJ, PsbK, PsbL, PsbM, PsbT, PsbX, PsbY, PsbZ, Psb30/Ycf12, at least 3 peripheral proteins of the oxygen-evolving complex and a large number of cofactors. It forms dimeric complexes. Requires Binds multiple chlorophylls and provides some of the ligands for the Ca-4Mn-5O cluster of the oxygen-evolving complex. It may also provide a ligand for a Cl- that is required for oxygen evolution. PSII binds additional chlorophylls, carotenoids and specific lipids. as cofactor.

The protein localises to the plastid. It is found in the chloroplast thylakoid membrane. Its function is as follows. One of the components of the core complex of photosystem II (PSII). It binds chlorophyll and helps catalyze the primary light-induced photochemical processes of PSII. PSII is a light-driven water:plastoquinone oxidoreductase, using light energy to abstract electrons from H(2)O, generating O(2) and a proton gradient subsequently used for ATP formation. In Cycas taitungensis (Prince sago), this protein is Photosystem II CP43 reaction center protein.